We begin with the raw amino-acid sequence, 117 residues long: Large ribosomal subunit protein uL18 (117 aa).

It belongs to the universal ribosomal protein uL18 family. Part of the 50S ribosomal subunit; part of the 5S rRNA/L5/L18/L25 subcomplex. Contacts the 5S and 23S rRNAs.

Functionally, this is one of the proteins that bind and probably mediate the attachment of the 5S RNA into the large ribosomal subunit, where it forms part of the central protuberance. In Yersinia pseudotuberculosis serotype O:1b (strain IP 31758), this protein is Large ribosomal subunit protein uL18.